A 242-amino-acid chain; its full sequence is Probable septum site-determining protein MinC (242 aa).

The span at A120 to P135 shows a compositional bias: basic and acidic residues. The interval A120–R144 is disordered.

It belongs to the MinC family. Interacts with MinD and FtsZ.

In terms of biological role, cell division inhibitor that blocks the formation of polar Z ring septums. Rapidly oscillates between the poles of the cell to destabilize FtsZ filaments that have formed before they mature into polar Z rings. Prevents FtsZ polymerization. The sequence is that of Probable septum site-determining protein MinC from Ectopseudomonas mendocina (strain ymp) (Pseudomonas mendocina).